Consider the following 404-residue polypeptide: MSEVLATYLLTDTTDSEKRAEQIAAGLTVGSWTDLPLVKQEQLRKHKGRVVKVEEKEGTSENETQSVITIAYPEVNFSRDIPAVLTTVFGKLSLDGKIKLTDLEFSEGFKRSLPGPKFGIYGIRKLLGEFERPLLMSIFKGVIGRDLADIKEQLRQQALGGVDLIKDDEIFFENELAPFETRIIEGKQVLKETREETGHKTLYAVNLTGRTAELRDKARRAAELGADALLLNVFAYGLDVMQSLAEDKEIPLPIMAHPAVSGAFTSSPVYGLSHALLLGKLNRYCGADFSLFPSPYGSVALPKESALAIHDECVKDDVFHPSFAVPSAGIHPGMVPLLMRDFGIDHIINAGGGIHGHPKGGEGGGKAFRAIIDAVLEAQPIEEKAASCKDLQLALDKWGRVEAV.

The Proton acceptor role is filled by K91. Residues K140, 166–169, H257, G329, and 351–352 each bind substrate; these read KDDE and GG. 3 residues coordinate Mg(2+): K166, D168, and E169. Position 166 is an N6-carboxylysine (K166).

It belongs to the RuBisCO large chain family. Type IV subfamily. Homodimer. The cofactor is Mg(2+).

The enzyme catalyses 5-methylsulfanyl-2,3-dioxopentyl phosphate = 2-hydroxy-5-methylsulfanyl-3-oxopent-1-enyl phosphate. The protein operates within amino-acid biosynthesis; L-methionine biosynthesis via salvage pathway; L-methionine from S-methyl-5-thio-alpha-D-ribose 1-phosphate: step 3/6. Catalyzes the enolization of 2,3-diketo-5-methylthiopentyl-1-phosphate (DK-MTP-1-P) into 2-hydroxy-3-keto-5-methylthiopentenyl-1-phosphate (HK-MTPenyl-1-P). This is 2,3-diketo-5-methylthiopentyl-1-phosphate enolase from Bacillus velezensis (strain DSM 23117 / BGSC 10A6 / LMG 26770 / FZB42) (Bacillus amyloliquefaciens subsp. plantarum).